We begin with the raw amino-acid sequence, 111 residues long: Dormancy-associated protein 1 (111 aa).

The disordered stretch occupies residues 30–60; that stretch reads KDDGASNQLMRSTSIPTTPTTPVTPTTPSSA. A compositionally biased stretch (low complexity) spans 41–59; it reads STSIPTTPTTPVTPTTPSS.

This sequence belongs to the DRM1/ARP family. In terms of tissue distribution, expressed in axilary buds and in non-growing stems and roots. Detected in sepals, stamens and carpels, but barely detected in petals or leaflets.

This Pisum sativum (Garden pea) protein is Dormancy-associated protein 1.